Here is a 265-residue protein sequence, read N- to C-terminus: ClpXP adapter protein SpxH (265 aa).

It belongs to the SpxH family. As to quaternary structure, interacts with Spx.

The protein resides in the cytoplasm. Functionally, adapter protein required for efficient degradation of Spx by ClpXP under non-stress conditions. Interaction with Spx stabilizes Spx and exposes the C-terminus of Spx for recognition and proteolysis by ClpXP. In Staphylococcus haemolyticus (strain JCSC1435), this protein is ClpXP adapter protein SpxH.